Here is a 156-residue protein sequence, read N- to C-terminus: Endoribonuclease YbeY (156 aa).

Zn(2+) is bound by residues histidine 122, histidine 126, and histidine 132.

It belongs to the endoribonuclease YbeY family. The cofactor is Zn(2+).

Its subcellular location is the cytoplasm. Functionally, single strand-specific metallo-endoribonuclease involved in late-stage 70S ribosome quality control and in maturation of the 3' terminus of the 16S rRNA. This is Endoribonuclease YbeY from Pediococcus pentosaceus (strain ATCC 25745 / CCUG 21536 / LMG 10740 / 183-1w).